A 404-amino-acid polypeptide reads, in one-letter code: MKVLVINTGSSSFKYQLIDMPMEQVLVSGLVERIGEEVGQMVHKIYPNTSQEKKYTTTQPFSTHVEGMQAVVAELINPKHGILHSVKEIYAIGHRVVMGGETMKHPALINQHVKNIIRECAIFSPLHNLSHLAGIETAEELFPGIPNVAVFDSEFHQTMPKVAYLYPLPYDIYDDYKIRRYGFHGTSHRYVAQQTANFLNRPIKELNFITCHLGNGCSMTAIKNGKSIDTSMGLTPLDGLMMGTRCGDIDPAIVPFLIEKTEKSAKDVDELMNKQSGLKGICGMNDMRDIHEACAQGNAKAQLALDMFIYRIKKYLGAYYAILGHLDGIIFTAGIGENDTIVREKVCSGLENLGIFLDSSRNNTHSSTLRLISTDNSPIPIFVVPTNEELEIAKLTIQLVSNTQ.

Asn7 contacts Mg(2+). Residue Lys14 participates in ATP binding. Arg95 contributes to the substrate binding site. Asp152 acts as the Proton donor/acceptor in catalysis. Residues 212–216 (HLGNG), 286–288 (DMR), and 334–338 (GIGEN) contribute to the ATP site. Mg(2+) is bound at residue Glu388.

It belongs to the acetokinase family. In terms of assembly, homodimer. Requires Mg(2+) as cofactor. Mn(2+) serves as cofactor.

It is found in the cytoplasm. The enzyme catalyses acetate + ATP = acetyl phosphate + ADP. It functions in the pathway metabolic intermediate biosynthesis; acetyl-CoA biosynthesis; acetyl-CoA from acetate: step 1/2. Its function is as follows. Catalyzes the formation of acetyl phosphate from acetate and ATP. Can also catalyze the reverse reaction. The protein is Acetate kinase of Lawsonia intracellularis (strain PHE/MN1-00).